Consider the following 290-residue polypeptide: Bifunctional protein FolD 3 (290 aa).

Residues 163-165 and isoleucine 229 contribute to the NADP(+) site; that span reads GHS.

The protein belongs to the tetrahydrofolate dehydrogenase/cyclohydrolase family. In terms of assembly, homodimer.

It catalyses the reaction (6R)-5,10-methylene-5,6,7,8-tetrahydrofolate + NADP(+) = (6R)-5,10-methenyltetrahydrofolate + NADPH. The enzyme catalyses (6R)-5,10-methenyltetrahydrofolate + H2O = (6R)-10-formyltetrahydrofolate + H(+). The protein operates within one-carbon metabolism; tetrahydrofolate interconversion. In terms of biological role, catalyzes the oxidation of 5,10-methylenetetrahydrofolate to 5,10-methenyltetrahydrofolate and then the hydrolysis of 5,10-methenyltetrahydrofolate to 10-formyltetrahydrofolate. This Roseobacter denitrificans (strain ATCC 33942 / OCh 114) (Erythrobacter sp. (strain OCh 114)) protein is Bifunctional protein FolD 3.